A 301-amino-acid chain; its full sequence is Heme A synthase (301 aa).

Residues 1-5 are Cytoplasmic-facing; sequence MHKKL. Residues 6–26 form a helical membrane-spanning segment; sequence AFFSGFVTLGMMLVLIMGGTV. Residues 27–62 are Extracellular-facing; it reads TKTDSGDGCGTDWPLCHGKLIPTNPSVETMIEYSHR. The cysteines at positions 35 and 42 are disulfide-linked. Glu-58 is a catalytic residue. His-61 is a binding site for heme o. Residues 63-83 traverse the membrane as a helical segment; the sequence is VVSGIEGLLIIALAIWTFIAV. Topologically, residues 84-90 are cytoplasmic; the sequence is KHRVDVK. The chain crosses the membrane as a helical span at residues 91 to 111; it reads IFAFLAFIFMLIQSIIGAGAV. Over 112–121 the chain is Extracellular; that stretch reads IWQQSDAILA. A helical membrane pass occupies residues 122–142; that stretch reads LHFGISLVSFASLLILTILLF. His-123 lines the heme o pocket. Over 143 to 158 the chain is Cytoplasmic; sequence EGDREHQVVSRRLRSH. Residues 159–179 form a helical membrane-spanning segment; that stretch reads LYGLSIYTMIVVYTGAYVRHL. Over 180-203 the chain is Extracellular; it reads GATYACVGWPICEQEVWTFESYVQ. Cysteines 185 and 191 form a disulfide. Residues 204–224 form a helical membrane-spanning segment; the sequence is MGHRVMAGLLVLYTLYVLYLA. A heme b-binding site is contributed by His-206. Topologically, residues 225–234 are cytoplasmic; that stretch reads RKEMNRLIER. Residues 235–255 traverse the membrane as a helical segment; sequence GMMASLFFILLQVGTGAWIVL. At 256–259 the chain is on the extracellular side; it reads GGHA. Residues 260–280 form a helical membrane-spanning segment; it reads TYVPLLHAFLITCYFGILSYL. His-266 is a binding site for heme b. The Cytoplasmic segment spans residues 281–301; sequence SYHAYRSTARQDGAQLKNMNG.

The protein belongs to the COX15/CtaA family. Type 1 subfamily. In terms of assembly, interacts with CtaB. Heme b serves as cofactor.

It localises to the cell membrane. The catalysed reaction is Fe(II)-heme o + 2 A + H2O = Fe(II)-heme a + 2 AH2. It participates in porphyrin-containing compound metabolism; heme A biosynthesis; heme A from heme O: step 1/1. In terms of biological role, catalyzes the conversion of heme O to heme A by two successive hydroxylations of the methyl group at C8. The first hydroxylation forms heme I, the second hydroxylation results in an unstable dihydroxymethyl group, which spontaneously dehydrates, resulting in the formyl group of heme A. The chain is Heme A synthase from Exiguobacterium sp. (strain ATCC BAA-1283 / AT1b).